The chain runs to 165 residues: Growth arrest and DNA damage-inducible protein GADD45 alpha (165 aa).

Position 2 is a phosphothreonine (T2).

Belongs to the GADD45 family. In terms of assembly, interacts with AURKA, PCNA, GADD45GIP1 and MAPK14.

It localises to the nucleus. Might affect PCNA interaction with some CDK (cell division protein kinase) complexes; stimulates DNA excision repair in vitro and inhibits entry of cells into S phase. In T-cells, functions as a regulator of p38 MAPKs by inhibiting p88 phosphorylation and activity. The polypeptide is Growth arrest and DNA damage-inducible protein GADD45 alpha (Gadd45a) (Rattus norvegicus (Rat)).